The chain runs to 150 residues: UPF0179 protein Mbur_1033 (150 aa).

This sequence belongs to the UPF0179 family.

The polypeptide is UPF0179 protein Mbur_1033 (Methanococcoides burtonii (strain DSM 6242 / NBRC 107633 / OCM 468 / ACE-M)).